Consider the following 401-residue polypeptide: MPSARFGRRGIVLLTLGLVGPCGVGGAAAGSSTGIMALRFLLGFLLAGVDLGVYLMRLELCDPTQRLRVALAGELVGVGGHFLFLGLALVSKDWRFLQRMITAPCILFLFYGWPGLFLESARWLIVKRQIEEAQSVLRILAERNRPHGQMLGEEAQEALQELENTCPLPATSTFSFASLLNYRNIWKNLLILGFTNFIAHAIRHCYQPVGGGGSPSDFYLCSLLASGTAALACVFLGVTVDRFGRRGILLLSMTLTGIASLVLLGLWDYLNDAAITTFSVLGLFSSQASAILSTLLASEVIPTTVRGRGLGLIMALGALGGLSCPAQRLHMGHGAFLQHVVLAACALLCILSIMLLPETKRKLLPEVLRDGELCRRPSLLRQPPPNRCDHVPLLATPNPAL.

10 helical membrane passes run 10–30, 35–55, 69–89, 100–120, 184–203, 218–238, 247–267, 277–297, 309–329, and 336–356; these read GIVL…AAAG, IMAL…GVYL, VALA…GLAL, MITA…FLES, NIWK…HAIR, FYLC…FLGV, GILL…LGLW, TFSV…TLLA, GLGL…AQRL, and FLQH…IMLL.

Belongs to the major facilitator (TC 2.A.1) superfamily. Organic cation transporter (TC 2.A.1.19) family. As to expression, widely expressed.

Its subcellular location is the cell membrane. It is found in the vacuole membrane. Functionally, cell surface receptor for LCN2 (24p3) that plays a key role in iron homeostasis and transport. Able to bind iron-bound LCN2 (holo-24p3), followed by internalization of holo-24p3 and release of iron, thereby increasing intracellular iron concentration and leading to inhibition of apoptosis. Also binds iron-free LCN2 (apo-24p3), followed by internalization of apo-24p3 and its association with an intracellular siderophore, leading to iron chelation and iron transfer to the extracellular medium, thereby reducing intracellular iron concentration and resulting in apoptosis. The sequence is that of Solute carrier family 22 member 17 (Slc22a17) from Mus musculus (Mouse).